The primary structure comprises 578 residues: Poly(A) RNA polymerase cid13 (578 aa).

Positions 110 and 112 each coordinate Mg(2+). The 56-residue stretch at 275-330 folds into the PAP-associated domain; it reads SLGILFVEFFRFFGYLFDYEHFVLSIRHGTFLSKRAKGWQFQLNNFLCVEEPFHTS. The segment at 495–565 is disordered; it reads SHHFDERHGG…SEVVSPVSLH (71 aa). Residues 496-510 are compositionally biased toward basic and acidic residues; sequence HHFDERHGGDRHEKN. Over residues 516–527 the composition is skewed to basic residues; the sequence is RYSRNKFHKKKQ. Low complexity predominate over residues 547–565; sequence NSPPSNSSSSEVVSPVSLH.

It belongs to the DNA polymerase type-B-like family. In terms of assembly, interacts with pab1. It depends on Mg(2+) as a cofactor. The cofactor is Mn(2+).

It is found in the cytoplasm. The protein resides in the nucleus. It catalyses the reaction RNA(n) + ATP = RNA(n)-3'-adenine ribonucleotide + diphosphate. Polymerase that creates the 3' poly(A) tail of suc22 mRNA. In Schizosaccharomyces pombe (strain 972 / ATCC 24843) (Fission yeast), this protein is Poly(A) RNA polymerase cid13 (cid13).